Here is a 790-residue protein sequence, read N- to C-terminus: PGC-1 and ERR-induced regulator in muscle protein 1 (790 aa).

Disordered regions lie at residues 38–391 (LLSS…TPIS), 425–449 (VASSPPVSEAVPRMTESSGLVSTPV), 507–545 (SVAGPSPNKPGSGQASARPSAPQTATGAHGGPGAWEAVA), and 626–648 (QRSRRRGSPEPLPRADPVPAPIP). The segment covering 40 to 52 (SSDIDQGDSSGSS) has biased composition (low complexity). Composition is skewed to polar residues over residues 80 to 89 (ATQQPVSRSQ) and 98 to 107 (TGQQTPSTSA). Low complexity predominate over residues 111–123 (APPSLGPGASPPS). Over residues 146–157 (APRPPGEPPGSP) the composition is skewed to pro residues. The span at 158–169 (KSPGHSTGSQRP) shows a compositional bias: low complexity. Positions 170–179 (PDSPGAPPRS) are enriched in pro residues. The span at 366–391 (KPQSDTAVSTPASEPQSSVALSTPIS) shows a compositional bias: polar residues. A compositionally biased stretch (polar residues) spans 515 to 532 (KPGSGQASARPSAPQTAT). A compositionally biased stretch (pro residues) spans 635–648 (EPLPRADPVPAPIP).

In terms of tissue distribution, muscle-specific expression is increased by endurance exercise.

It is found in the cytoplasm. Its subcellular location is the nucleus. Regulates the expression of selective PPARGC1A/B and ESRRA/B/G target genes with roles in glucose and lipid metabolism, energy transfer, contractile function, muscle mitochondrial biogenesis and oxidative capacity. Required for the efficient induction of MT-CO2, MT-CO3, COX4I1, TFB1M, TFB2M, POLRMT and SIRT3 by PPARGC1A. Positively regulates the PPARGC1A/ESRRG-induced expression of CKMT2, TNNI3 and SLC2A4 and negatively regulates the PPARGC1A/ESRRG-induced expression of PDK4. This is PGC-1 and ERR-induced regulator in muscle protein 1 (PERM1) from Homo sapiens (Human).